Consider the following 60-residue polypeptide: MFTLKKPLLVLFFLATINLSLCEQERNAEEERRDDDERNVEVEKRFFPIVGKLLSGLFGK.

An N-terminal signal peptide occupies residues 1 to 22 (MFTLKKPLLVLFFLATINLSLC). A propeptide spans 23–43 (EQERNAEEERRDDDERNVEVE) (removed in mature form).

As to expression, expressed by the skin glands.

The protein resides in the secreted. Its function is as follows. Antimicrobial peptide active against a variety of Gram-positive bacterial strains but not against Gram-negative bacteria. Has weak antifungal activity against a slime mold isolate. Has weak hemolytic activity against human erythrocytes. In Amolops chunganensis (Chungan torrent frog), this protein is Temporin-CG2.